Consider the following 192-residue polypeptide: ATP-dependent Clp protease proteolytic subunit 1 (192 aa).

Catalysis depends on S92, which acts as the Nucleophile. The active site involves H117.

It belongs to the peptidase S14 family. As to quaternary structure, fourteen ClpP subunits assemble into 2 heptameric rings which stack back to back to give a disk-like structure with a central cavity, resembling the structure of eukaryotic proteasomes.

It localises to the cytoplasm. The enzyme catalyses Hydrolysis of proteins to small peptides in the presence of ATP and magnesium. alpha-casein is the usual test substrate. In the absence of ATP, only oligopeptides shorter than five residues are hydrolyzed (such as succinyl-Leu-Tyr-|-NHMec, and Leu-Tyr-Leu-|-Tyr-Trp, in which cleavage of the -Tyr-|-Leu- and -Tyr-|-Trp bonds also occurs).. Its function is as follows. Cleaves peptides in various proteins in a process that requires ATP hydrolysis. Has a chymotrypsin-like activity. Plays a major role in the degradation of misfolded proteins. This Chlamydia muridarum (strain MoPn / Nigg) protein is ATP-dependent Clp protease proteolytic subunit 1.